The sequence spans 718 residues: Ribosomal RNA large subunit methyltransferase K/L (718 aa).

Residues 44–155 enclose the THUMP domain; the sequence is DAYKVCIYSY…KQFVNVFLCL (112 aa).

This sequence belongs to the methyltransferase superfamily. RlmKL family.

Its subcellular location is the cytoplasm. The enzyme catalyses guanosine(2445) in 23S rRNA + S-adenosyl-L-methionine = N(2)-methylguanosine(2445) in 23S rRNA + S-adenosyl-L-homocysteine + H(+). The catalysed reaction is guanosine(2069) in 23S rRNA + S-adenosyl-L-methionine = N(2)-methylguanosine(2069) in 23S rRNA + S-adenosyl-L-homocysteine + H(+). Its function is as follows. Specifically methylates the guanine in position 2445 (m2G2445) and the guanine in position 2069 (m7G2069) of 23S rRNA. The chain is Ribosomal RNA large subunit methyltransferase K/L from Francisella tularensis subsp. novicida (strain U112).